Consider the following 496-residue polypeptide: E3 ubiquitin-protein ligase Hakai (496 aa).

A disordered region spans residues Pro-35–Asp-60. The RING-type; degenerate zinc finger occupies Cys-104–Leu-144. Residues Cys-157–His-215 are HYB domain. A C2H2-type zinc finger spans residues Phe-173 to His-199. A compositionally biased stretch (polar residues) spans Val-304–Ala-314. A disordered region spans residues Val-304–Gln-496. Pro residues-rich tracts occupy residues Ala-350–Ser-360, Gly-380–Gly-397, and Met-407–His-430. The segment covering Ser-434 to Pro-449 has biased composition (polar residues). Residues Pro-464–Pro-483 are compositionally biased toward pro residues.

This sequence belongs to the Hakai family. In terms of assembly, homodimer. Interacts with tyrosine-phosphorylated SRC substrates. Component of the WMM complex, a N6-methyltransferase complex composed of a catalytic subcomplex, named MAC, and of an associated subcomplex, named MACOM. Component of the MACOM subcomplex.

It is found in the nucleus speckle. The protein resides in the nucleus. It localises to the nucleoplasm. It carries out the reaction S-ubiquitinyl-[E2 ubiquitin-conjugating enzyme]-L-cysteine + [acceptor protein]-L-lysine = [E2 ubiquitin-conjugating enzyme]-L-cysteine + N(6)-ubiquitinyl-[acceptor protein]-L-lysine.. The protein operates within protein modification; protein ubiquitination. E3 ubiquitin-protein ligase that mediates ubiquitination of several tyrosine-phosphorylated Src substrates. Associated component of the WMM complex, a complex that mediates N6-methyladenosine (m6A) methylation of RNAs, a modification that plays a role in the efficiency of mRNA splicing and RNA processing. This chain is E3 ubiquitin-protein ligase Hakai, found in Xenopus laevis (African clawed frog).